The primary structure comprises 216 residues: Somatotropin (216 aa).

The first 25 residues, 1-25 (MAPGSWFSPLFITVITLGLQWPQEA), serve as a signal peptide directing secretion. Histidine 46 is a binding site for Zn(2+). Cysteines 78 and 189 form a disulfide. Glutamate 198 contributes to the Zn(2+) binding site. Cysteine 206 and cysteine 214 are oxidised to a cystine.

The protein belongs to the somatotropin/prolactin family.

Its subcellular location is the secreted. Functionally, growth hormone plays an important role in growth control. This Anas platyrhynchos (Mallard) protein is Somatotropin (GH).